The sequence spans 140 residues: Large ribosomal subunit protein uL11 (140 aa).

The protein belongs to the universal ribosomal protein uL11 family. In terms of assembly, part of the ribosomal stalk of the 50S ribosomal subunit. Interacts with L10 and the large rRNA to form the base of the stalk. L10 forms an elongated spine to which L12 dimers bind in a sequential fashion forming a multimeric L10(L12)X complex. One or more lysine residues are methylated.

Forms part of the ribosomal stalk which helps the ribosome interact with GTP-bound translation factors. This Karelsulcia muelleri (strain GWSS) (Sulcia muelleri) protein is Large ribosomal subunit protein uL11.